A 389-amino-acid chain; its full sequence is Methionyl-tRNA formyltransferase, mitochondrial (389 aa).

The protein belongs to the Fmt family.

It localises to the mitochondrion. It catalyses the reaction L-methionyl-tRNA(fMet) + (6R)-10-formyltetrahydrofolate = N-formyl-L-methionyl-tRNA(fMet) + (6S)-5,6,7,8-tetrahydrofolate + H(+). Functionally, methionyl-tRNA formyltransferase that formylates methionyl-tRNA in mitochondria and is crucial for translation initiation. The chain is Methionyl-tRNA formyltransferase, mitochondrial (MTFMT) from Homo sapiens (Human).